The sequence spans 371 residues: MPHHYILTMFGLLPVATNISTWWNFGSMLLSCLMLQVTTGFFLAVHYTANTNLAFSSIIHIMRDVPYGWMMQNTHAIGASLFFICIYIHIARGLYYGSYLNKKTWMSGTTLLITLMATAFFGYILPWGQMSFWAATVITNLLTAVPYLGTSLTIWLWGGFAINDPTLTRFFALHFILPFIIISLSSLHILLLHEEGSSNPLGTNSDTDKIPFHPYHTYKDLLLLTLLLTLLLLTTFFLPNIMNDPENFSKANPLVTPQHIKPEWYFLFAYGILRSIPNKLGGALALVASILIIMTMPFTHTAHVRSMTFRPMSQLMFWTLISTFMTITWAATKPVEPPFMMISQTASMIYFMFFISNPILGWMENKIMKTM.

The next 4 membrane-spanning stretches (helical) occupy residues 25-45 (FGSMLLSCLMLQVTTGFFLAV), 69-90 (WMMQNTHAIGASLFFICIYIHI), 105-125 (WMSGTTLLITLMATAFFGYIL), and 170-190 (FFALHFILPFIIISLSSLHIL). Residues histidine 75 and histidine 89 each contribute to the heme b site. Positions 174 and 188 each coordinate heme b. Histidine 193 is an a ubiquinone binding site. The next 4 helical transmembrane spans lie at 218-238 (YKDLLLLTLLLTLLLLTTFFL), 280-300 (LGGALALVASILIIMTMPFTH), 312-332 (MSQLMFWTLISTFMTITWAAT), and 339-358 (FMMISQTASMIYFMFFISNP).

This sequence belongs to the cytochrome b family. The cytochrome bc1 complex contains 3 respiratory subunits (MT-CYB, CYC1 and UQCRFS1), 2 core proteins (UQCRC1 and UQCRC2) and probably 6 low-molecular weight proteins. Requires heme b as cofactor.

Its subcellular location is the mitochondrion inner membrane. Functionally, component of the ubiquinol-cytochrome c reductase complex (complex III or cytochrome b-c1 complex) that is part of the mitochondrial respiratory chain. The b-c1 complex mediates electron transfer from ubiquinol to cytochrome c. Contributes to the generation of a proton gradient across the mitochondrial membrane that is then used for ATP synthesis. This is Cytochrome b (MT-CYB) from Casarea dussumieri (Round Island keel-scaled boa).